The chain runs to 473 residues: Cyprosin (473 aa).

Residues 1 to 33 (LKKRKVNILNHPGEHAGSNDANARRKYGVRGNF) constitute a propeptide, activation peptide. A Peptidase A1 domain is found at 51 to 470 (YFGEIGIGTP…DYGNLRVGFA (420 aa)). The active site involves Asp69. 2 cysteine pairs are disulfide-bonded: Cys82/Cys88 and Cys247/Cys251. Asp256 is an active-site residue. Positions 281–384 (VMSQQCKSLV…DKLCERLPSP (104 aa)) constitute a Saposin B-type domain. 4 cysteine pairs are disulfide-bonded: Cys286–Cys378, Cys311–Cys350, Cys317–Cys347, and Cys392–Cys429. N-linked (GlcNAc...) asparagine glycosylation is present at Asn364.

Belongs to the peptidase A1 family. Mostly present in the violet parts of styles and corollas of mature flowers.

In Cynara cardunculus (Cardoon), this protein is Cyprosin (CYPRO1).